The primary structure comprises 281 residues: MDRHVMEALGKARVVVENGRVVEVTEPKIKYCPLFAKHRGIKEITKESIKENIEFRIKDFGLFTKNRVVEESRYIVPFGASEILMSALKRKAIDVAVIVADCAGTIITSNPNLVQGLCGRISGIIETSPILEVIEKIEKAGGVVLNKKTAEINQFEGVKKAIELDYKKIAVTVTNLEDAKRCKSLENDEIKILTFGVHLTGIEGSEEIAKYFDLVTACASKVLREKLKGKIKAQIGKTIPIFALSDFGKEILLERAKDLDKVLISIENLPVLNDNQPKPLI.

This is an uncharacterized protein from Methanocaldococcus jannaschii (strain ATCC 43067 / DSM 2661 / JAL-1 / JCM 10045 / NBRC 100440) (Methanococcus jannaschii).